Reading from the N-terminus, the 214-residue chain is MSSSHRKLSGRIVIATHNPGKLAEMRELLAPYGVEAVSAGELSLGEPDETGETFQANARIKAVAAADAAQLPAFADDSGIVVHALDGAPGIYSARWAGPDKDFTAAMTRIERLLQERGATGPDKRGAHFVSALCVAWPDGHVEEVEARVDGTLVWPPRGSAGFGYDPMFLPEGHDRTFGEMTSLEKHGLPPLGLGLSHRARAFVKLAEICLDQR.

16–21 is a binding site for substrate; sequence THNPGK. Asp48 and Asp77 together coordinate Mg(2+). Asp77 functions as the Proton acceptor in the catalytic mechanism. Substrate is bound by residues Ser78, 163–166, Lys186, and 198–199; these read FGYD and HR.

Belongs to the HAM1 NTPase family. As to quaternary structure, homodimer. The cofactor is Mg(2+).

The catalysed reaction is XTP + H2O = XMP + diphosphate + H(+). It carries out the reaction dITP + H2O = dIMP + diphosphate + H(+). It catalyses the reaction ITP + H2O = IMP + diphosphate + H(+). Functionally, pyrophosphatase that catalyzes the hydrolysis of nucleoside triphosphates to their monophosphate derivatives, with a high preference for the non-canonical purine nucleotides XTP (xanthosine triphosphate), dITP (deoxyinosine triphosphate) and ITP. Seems to function as a house-cleaning enzyme that removes non-canonical purine nucleotides from the nucleotide pool, thus preventing their incorporation into DNA/RNA and avoiding chromosomal lesions. This Bradyrhizobium sp. (strain BTAi1 / ATCC BAA-1182) protein is dITP/XTP pyrophosphatase.